The following is a 541-amino-acid chain: Chaperonin GroEL 2 (541 aa).

Residues 29-32 (TLGP) and 86-90 (DGTTT) contribute to the ATP site. Lys-132 participates in a covalent cross-link: Isoglutamyl lysine isopeptide (Lys-Gln) (interchain with Q-Cter in protein Pup). Residues Gly-413, 476–478 (NAA), and Asp-492 contribute to the ATP site.

Belongs to the chaperonin (HSP60) family. In terms of assembly, forms a cylinder of 14 subunits composed of two heptameric rings stacked back-to-back. Interacts with the co-chaperonin GroES.

The protein localises to the secreted. Its subcellular location is the capsule. It localises to the cell surface. It is found in the cell wall. The catalysed reaction is ATP + H2O + a folded polypeptide = ADP + phosphate + an unfolded polypeptide.. In terms of biological role, together with its co-chaperonin GroES, plays an essential role in assisting protein folding. The GroEL-GroES system forms a nano-cage that allows encapsulation of the non-native substrate proteins and provides a physical environment optimized to promote and accelerate protein folding. This is Chaperonin GroEL 2 from Mycolicibacterium smegmatis (strain ATCC 700084 / mc(2)155) (Mycobacterium smegmatis).